Here is a 234-residue protein sequence, read N- to C-terminus: Sugar fermentation stimulation protein A (234 aa).

The segment at residues Leu-201 to Ser-220 is a DNA-binding region (H-T-H motif).

This sequence belongs to the SfsA family.

Functionally, binds to DNA non-specifically. Could be a regulatory factor involved in maltose metabolism. In Shigella dysenteriae serotype 1 (strain Sd197), this protein is Sugar fermentation stimulation protein A.